Consider the following 592-residue polypeptide: Multidrug transporter AQR1 (592 aa).

Residues 1–77 (MVESGPHSIN…EISSTHSQDA (77 aa)) are disordered. A helical membrane pass occupies residues 99 to 119 (WCMVALLTACGFWSSLGSPIY). Asn138 carries N-linked (GlcNAc...) asparagine glycosylation. 5 consecutive transmembrane segments (helical) span residues 139–159 (ITVVVYLLFQGLAPTCSGGLA), 166–186 (PVLLIGMLIYVVASIGLACAP), 188–208 (YGVIVFLRCVQSIGISPSIAI), 231–251 (GFVLLGQAFGSLIGAALAAAW), and 255–275 (AIFWFLTIGCGASFAICFALL). Asn285 is a glycosylation site (N-linked (GlcNAc...) asparagine). 6 helical membrane passes run 340-360 (IFLSLLPPGLAFAMWTLMLSA), 374-394 (LTIIGVCYLPAGIGGLIGSFA), 432-452 (LQSVLPQNFLCVVTYILFGWS), 459-479 (IPSILITSCVSSFCAMSTLSA), 497-517 (SCFNFMRCSLSAILMGCFAKM), and 523-543 (VGGTFTLLAGLVFVGNFLMFI).

The protein belongs to the major facilitator superfamily. CAR1 family.

It localises to the cell membrane. Multidrug transporter acts as a determinant of resistance to acetic acid, flucytosine and clotrimazole, these 3 compounds acting synergistically against the pathogen. Reduces the intracellular accumulation of the antifungal agents flucytosine and, to a moderate extent, of clotrimazole. Its role in acetic acid resistance may be indirect, presumably through the transport of a still unidentified physiological substrate. The chain is Multidrug transporter AQR1 from Candida glabrata (strain ATCC 2001 / BCRC 20586 / JCM 3761 / NBRC 0622 / NRRL Y-65 / CBS 138) (Yeast).